Here is a 619-residue protein sequence, read N- to C-terminus: Dihydroxy-acid dehydratase (619 aa).

D81 serves as a coordination point for Mg(2+). C122 contacts [2Fe-2S] cluster. D123 and K124 together coordinate Mg(2+). The residue at position 124 (K124) is an N6-carboxylysine. Position 201 (C201) interacts with [2Fe-2S] cluster. E496 provides a ligand contact to Mg(2+). The Proton acceptor role is filled by S522.

It belongs to the IlvD/Edd family. In terms of assembly, homodimer. The cofactor is [2Fe-2S] cluster. Mg(2+) serves as cofactor.

It catalyses the reaction (2R)-2,3-dihydroxy-3-methylbutanoate = 3-methyl-2-oxobutanoate + H2O. The catalysed reaction is (2R,3R)-2,3-dihydroxy-3-methylpentanoate = (S)-3-methyl-2-oxopentanoate + H2O. It functions in the pathway amino-acid biosynthesis; L-isoleucine biosynthesis; L-isoleucine from 2-oxobutanoate: step 3/4. Its pathway is amino-acid biosynthesis; L-valine biosynthesis; L-valine from pyruvate: step 3/4. In terms of biological role, functions in the biosynthesis of branched-chain amino acids. Catalyzes the dehydration of (2R,3R)-2,3-dihydroxy-3-methylpentanoate (2,3-dihydroxy-3-methylvalerate) into 2-oxo-3-methylpentanoate (2-oxo-3-methylvalerate) and of (2R)-2,3-dihydroxy-3-methylbutanoate (2,3-dihydroxyisovalerate) into 2-oxo-3-methylbutanoate (2-oxoisovalerate), the penultimate precursor to L-isoleucine and L-valine, respectively. The polypeptide is Dihydroxy-acid dehydratase (Burkholderia vietnamiensis (strain G4 / LMG 22486) (Burkholderia cepacia (strain R1808))).